Consider the following 419-residue polypeptide: E3 ubiquitin-protein ligase RNF130 (419 aa).

An N-terminal signal peptide occupies residues Met1–Ala27. At Asp28–Ser194 the chain is on the extracellular side. N-linked (GlcNAc...) asparagine glycans are attached at residues Asn29, Asn40, Asn112, Asn135, Asn172, and Asn189. Residues Ile105–Gln176 enclose the PA domain. Residues Leu195–Phe217 traverse the membrane as a helical segment. At Ile218–Phe419 the chain is on the cytoplasmic side. Residues Cys264–Lys305 form an RING-type zinc finger. At Ser341 the chain carries Phosphoserine.

In testis sections, expressed in interstitial tissue and seminiferous tubules. In tubules, expression is mainly in postmeiotic germ cells and to a much lesser extent in Sertoli cells (at protein level). Expressed at high levels in liver, lung, stomach, heart and thymus.

The protein resides in the membrane. Its subcellular location is the cytoplasm. The catalysed reaction is S-ubiquitinyl-[E2 ubiquitin-conjugating enzyme]-L-cysteine + [acceptor protein]-L-lysine = [E2 ubiquitin-conjugating enzyme]-L-cysteine + N(6)-ubiquitinyl-[acceptor protein]-L-lysine.. The protein operates within protein modification; protein ubiquitination. Acts as an E3 ubiquitin-protein ligase. May have a role during the programmed cell death of hematopoietic cells. The sequence is that of E3 ubiquitin-protein ligase RNF130 from Rattus norvegicus (Rat).